The following is a 401-amino-acid chain: Probable acid ceramidase (401 aa).

The signal sequence occupies residues 1–22 (MKPVAISLSLLLLVTLLPGSEQ). Residues Asn-101, Asn-303, and Asn-371 are each glycosylated (N-linked (GlcNAc...) asparagine).

The protein belongs to the acid ceramidase family.

The catalysed reaction is an N-acyl-sphingoid base + H2O = a sphingoid base + a fatty acid. The enzyme catalyses an N-acylsphing-4-enine + H2O = sphing-4-enine + a fatty acid. It carries out the reaction an N-acyl-15-methylhexadecasphing-4-enine + H2O = 15-methylhexadecasphing-4-enine + a fatty acid. In terms of biological role, catalyzes the hydrolysis of ceramides into sphingoid base and free fatty acid. C.elegans contain specific sphingoid bases, which are unique or different in structure compared to the sphingoid bases found in other animals. Two examples of these distinctive compounds are: 15-methylhexadecasphinganine and 15-methylhexadecasphing-4-enine. This Caenorhabditis elegans protein is Probable acid ceramidase.